Consider the following 279-residue polypeptide: Tryptophan synthase alpha chain (279 aa).

Residues Glu-50 and Asp-61 each act as proton acceptor in the active site.

This sequence belongs to the TrpA family. Tetramer of two alpha and two beta chains.

It catalyses the reaction (1S,2R)-1-C-(indol-3-yl)glycerol 3-phosphate + L-serine = D-glyceraldehyde 3-phosphate + L-tryptophan + H2O. Its pathway is amino-acid biosynthesis; L-tryptophan biosynthesis; L-tryptophan from chorismate: step 5/5. Its function is as follows. The alpha subunit is responsible for the aldol cleavage of indoleglycerol phosphate to indole and glyceraldehyde 3-phosphate. The protein is Tryptophan synthase alpha chain of Brucella melitensis biotype 1 (strain ATCC 23456 / CCUG 17765 / NCTC 10094 / 16M).